We begin with the raw amino-acid sequence, 480 residues long: Membrane-bound lytic murein transglycosylase F (480 aa).

Positions 1-15 (MNRILLTLLTLTLLA) are cleaved as a signal peptide. Residues 16–259 (GCQRVAVEET…HLDEKYFAHV (244 aa)) are non-LT domain. The interval 260–480 (KRFDYVDTRA…EKAITGAQPE (221 aa)) is LT domain. The active site involves Glu304.

The protein in the N-terminal section; belongs to the bacterial solute-binding protein 3 family. It in the C-terminal section; belongs to the transglycosylase Slt family.

It is found in the cell outer membrane. The catalysed reaction is Exolytic cleavage of the (1-&gt;4)-beta-glycosidic linkage between N-acetylmuramic acid (MurNAc) and N-acetylglucosamine (GlcNAc) residues in peptidoglycan, from either the reducing or the non-reducing ends of the peptidoglycan chains, with concomitant formation of a 1,6-anhydrobond in the MurNAc residue.. In terms of biological role, murein-degrading enzyme that degrades murein glycan strands and insoluble, high-molecular weight murein sacculi, with the concomitant formation of a 1,6-anhydromuramoyl product. Lytic transglycosylases (LTs) play an integral role in the metabolism of the peptidoglycan (PG) sacculus. Their lytic action creates space within the PG sacculus to allow for its expansion as well as for the insertion of various structures such as secretion systems and flagella. In Shewanella woodyi (strain ATCC 51908 / MS32), this protein is Membrane-bound lytic murein transglycosylase F.